We begin with the raw amino-acid sequence, 152 residues long: Large ribosomal subunit protein eL29 (152 aa).

Basic residues predominate over residues 1–26 (MAKSKNHTTHNQSRKWHRNGIKKPRS). The segment at 1–32 (MAKSKNHTTHNQSRKWHRNGIKKPRSQRYESL) is disordered. The residue at position 5 (Lys5) is an N6-methyllysine. A Phosphoserine modification is found at Ser31. At Lys33 the chain carries N6-acetyllysine. The interval 119-152 (CRPKSQAKASTKAKPPAAAAPAAKGAQAPTKAPE) is disordered. Low complexity predominate over residues 121–152 (PKSQAKASTKAKPPAAAAPAAKGAQAPTKAPE).

The protein belongs to the eukaryotic ribosomal protein eL29 family. As to quaternary structure, component of the large ribosomal subunit.

It localises to the cytoplasm. Its function is as follows. Component of the large ribosomal subunit. The ribosome is a large ribonucleoprotein complex responsible for the synthesis of proteins in the cell. This is Large ribosomal subunit protein eL29 (RPL29) from Bos taurus (Bovine).